The chain runs to 395 residues: Proteinase-activated receptor 2 (395 aa).

The signal sequence occupies residues Met1–Thr25. Residues Asn23 and Asn29 are each glycosylated (N-linked (GlcNAc...) asparagine). The propeptide at Val26–Arg34 is removed for receptor activation. At Ser35 to Gly69 the chain is on the extracellular side. A helical membrane pass occupies residues Lys70–Leu99. Residues Phe100–His106 lie on the Cytoplasmic side of the membrane. Residues Pro107 to His135 traverse the membrane as a helical segment. Topologically, residues Gly136–Lys147 are extracellular. Cys146 and Cys224 form a disulfide bridge. A helical transmembrane segment spans residues Val148–Ile175. Over Val176–His181 the chain is Cytoplasmic. The chain crosses the membrane as a helical span at residues Pro182 to Val209. The Extracellular segment spans residues Val210–Leu233. N-linked (GlcNAc...) asparagine glycosylation is present at Asn220. Residues Val234 to Leu267 traverse the membrane as a helical segment. Residues Gln268–Ser275 lie on the Cytoplasmic side of the membrane. The chain crosses the membrane as a helical span at residues Ser276 to Arg315. Over Gly316–Tyr321 the chain is Extracellular. Residues Ala322–Ile345 traverse the membrane as a helical segment. The Cytoplasmic segment spans residues Ser346–Tyr395. The S-palmitoyl cysteine moiety is linked to residue Cys359.

This sequence belongs to the G-protein coupled receptor 1 family. In terms of assembly, interacts with TLR4, COPS5 and TMED2. Interacts with GNAQ, GNA11, GNA12, GNA13 and GNA14. A proteolytic cleavage generates a new N-terminus that functions as a tethered ligand. Activating serine proteases include trypsin, mast cell tryptase, coagulation factors VII and Xa, myeloblastin/PRTN3 and membrane-type serine protease 1/ST14. Proposed subsequent cleavage by serine proteases is leading to receptor deactivation and include neutrophil elastase and cathepsin G. At least in part, implicated proteases are also shown to activate the receptor; the glycosylation status of the receptor is thought to contribute to the difference. In terms of processing, N-glycosylated and sialylated. Post-translationally, multiple phosphorylated on serine and threonine residues in the cytoplasmic region upon receptor activation; required for receptor desensitization and recruitment of beta-arrestin. Monoubiquitinated by CBL at the plasma membrane and in early endosomes; not required for receptor endocytosis but for translocation to late endosomes or lysosomes. Deubiquitination involves STAMBP and USP8; required for lysosomal trafficking and receptor degradation.

The protein localises to the cell membrane. In terms of biological role, receptor for trypsin and trypsin-like enzymes coupled to G proteins. Its function is mediated through the activation of several signaling pathways including phospholipase C (PLC), intracellular calcium, mitogen-activated protein kinase (MAPK), I-kappaB kinase/NF-kappaB and Rho. Can also be transactivated by cleaved F2R/PAR1. Involved in modulation of inflammatory responses and regulation of innate and adaptive immunity, and acts as a sensor for proteolytic enzymes generated during infection. Generally is promoting inflammation. Can signal synergistically with TLR4 and probably TLR2 in inflammatory responses and modulates TLR3 signaling. Has a protective role in establishing the endothelial barrier; the activity involves coagulation factor X. Regulates endothelial cell barrier integrity during neutrophil extravasation, probably following proteolytic cleavage by PRTN3. Proposed to have a bronchoprotective role in airway epithelium, but also shown to compromise the airway epithelial barrier by interrupting E-cadherin adhesion. Involved in the regulation of vascular tone; activation results in hypotension presumably mediated by vasodilation. Associates with a subset of G proteins alpha subunits such as GNAQ, GNA11, GNA14, GNA12 and GNA13, but probably not with G(o) alpha, G(i) subunit alpha-1 and G(i) subunit alpha-2. Believed to be a class B receptor which internalizes as a complex with arrestin and traffic with it to endosomal vesicles, presumably as desensitized receptor, for extended periods of time. Mediates inhibition of TNF-alpha stimulated JNK phosphorylation via coupling to GNAQ and GNA11; the function involves dissociation of RIPK1 and TRADD from TNFR1. Mediates phosphorylation of nuclear factor NF-kappa-B RELA subunit at 'Ser-536'; the function involves IKBKB and is predominantly independent of G proteins. Involved in cellular migration. Involved in cytoskeletal rearrangement and chemotaxis through beta-arrestin-promoted scaffolds; the function is independent of GNAQ and GNA11 and involves promotion of cofilin dephosphorylation and actin filament severing. Induces redistribution of COPS5 from the plasma membrane to the cytosol and activation of the JNK cascade is mediated by COPS5. Involved in the recruitment of leukocytes to the sites of inflammation and is the major PAR receptor capable of modulating eosinophil function such as pro-inflammatory cytokine secretion, superoxide production and degranulation. During inflammation promotes dendritic cell maturation, trafficking to the lymph nodes and subsequent T-cell activation. Involved in antimicrobial response of innate immune cells; activation enhances phagocytosis of Gram-positive and killing of Gram-negative bacteria. Acts synergistically with interferon-gamma in enhancing antiviral responses. Probably mediates activation of pro-inflammatory and pro-fibrotic responses in fibroblasts, triggered by coagulation factor Xa (F10). Probably mediates activation of barrier protective signaling responses in endothelial cells, triggered by coagulation factor Xa (F10). This Bos taurus (Bovine) protein is Proteinase-activated receptor 2 (F2RL1).